A 321-amino-acid polypeptide reads, in one-letter code: Probable arabinan endo-1,5-alpha-L-arabinosidase A (321 aa).

Positions 1–19 (MSASVFVVVASCLAALAHG) are cleaved as a signal peptide. The Proton acceptor role is filled by D34. Residue E200 is the Proton donor of the active site.

This sequence belongs to the glycosyl hydrolase 43 family.

Its subcellular location is the secreted. It catalyses the reaction Endohydrolysis of (1-&gt;5)-alpha-arabinofuranosidic linkages in (1-&gt;5)-arabinans.. It participates in glycan metabolism; L-arabinan degradation. Functionally, endo-1,5-alpha-L-arabinanase involved in degradation of pectin. Its preferred substrate is linear 1,5-alpha-L-arabinan. This is Probable arabinan endo-1,5-alpha-L-arabinosidase A (abnA) from Aspergillus fumigatus (strain ATCC MYA-4609 / CBS 101355 / FGSC A1100 / Af293) (Neosartorya fumigata).